Reading from the N-terminus, the 89-residue chain is Small ribosomal subunit protein uS14A (89 aa).

The protein belongs to the universal ribosomal protein uS14 family. Part of the 30S ribosomal subunit. Contacts proteins S3 and S10.

Binds 16S rRNA, required for the assembly of 30S particles and may also be responsible for determining the conformation of the 16S rRNA at the A site. The chain is Small ribosomal subunit protein uS14A from Streptococcus agalactiae serotype Ia (strain ATCC 27591 / A909 / CDC SS700).